We begin with the raw amino-acid sequence, 356 residues long: Probable cytosolic iron-sulfur protein assembly protein 1 (356 aa).

WD repeat units lie at residues 34–73, 89–128, 134–173, 179–218, 244–291, and 319–356; these read GHKRTVRSVAWSPNGEVLATASFDSTVGLWERIPENIRAE, GHDSECKSVAFSYNGNLLASCGRDKSVWVWEAQPDADYEC, EHSQDVKCVIWHPKEEILASASYDNTIKMYVDDPSCDWYC, AHSSTVWSLSFSPCGQFLASSSDDMTIWIWRRVSAAECVE, HFSG…ATLR, and AHGSVDVNCVKWAPMNTDGSAPTMIASAGDDGEIRIWT.

Belongs to the WD repeat CIA1 family.

Essential component of the cytosolic iron-sulfur (Fe/S) protein assembly machinery. Required for the maturation of extramitochondrial Fe/S proteins. The chain is Probable cytosolic iron-sulfur protein assembly protein 1 from Malassezia globosa (strain ATCC MYA-4612 / CBS 7966) (Dandruff-associated fungus).